The sequence spans 623 residues: Chaperone protein HtpG (623 aa).

Residues Met1 to Arg336 are a; substrate-binding. The segment at Glu337–Arg550 is b. The interval Ile551–Ser623 is c.

The protein belongs to the heat shock protein 90 family. In terms of assembly, homodimer.

The protein localises to the cytoplasm. Molecular chaperone. Has ATPase activity. The sequence is that of Chaperone protein HtpG from Legionella pneumophila (strain Paris).